The chain runs to 388 residues: L-lactate dehydrogenase (388 aa).

In terms of domain architecture, FMN hydroxy acid dehydrogenase spans 1 to 380; that stretch reads MIISAASDYR…SADALSRVTR (380 aa). Tyrosine 24 contacts substrate. FMN-binding residues include serine 106 and glutamine 127. Tyrosine 129 contacts substrate. Threonine 155 is an FMN binding site. Substrate is bound at residue arginine 164. Lysine 251 contacts FMN. Histidine 275 acts as the Proton acceptor in catalysis. Arginine 278 is a substrate binding site. Position 306-330 (306-330) interacts with FMN; that stretch reads DSGIRSGLDVVRMLALGADAVLLGR.

Belongs to the FMN-dependent alpha-hydroxy acid dehydrogenase family. FMN serves as cofactor.

It localises to the cell inner membrane. The enzyme catalyses (S)-lactate + A = pyruvate + AH2. In terms of biological role, catalyzes the conversion of L-lactate to pyruvate. Is coupled to the respiratory chain. This chain is L-lactate dehydrogenase, found in Xanthomonas axonopodis pv. citri (strain 306).